We begin with the raw amino-acid sequence, 95 residues long: UPF0125 protein BUsg_244 (95 aa).

It belongs to the UPF0125 (RnfH) family.

The sequence is that of UPF0125 protein BUsg_244 from Buchnera aphidicola subsp. Schizaphis graminum (strain Sg).